A 326-amino-acid chain; its full sequence is Phospho-N-acetylmuramoyl-pentapeptide-transferase (326 aa).

10 consecutive transmembrane segments (helical) span residues 13–33 (ILAP…IFIP), 57–77 (GTPT…ILIM), 85–105 (EMIL…DDIL), 121–141 (MILL…NVGT), 155–175 (NLGI…TNAV), 181–201 (IDGL…IIGF), 208–228 (VAVF…FNAF), 232–252 (IFMG…IALM), 257–277 (LFVI…IIQV), and 305–325 (VKIV…GFVA).

The protein belongs to the glycosyltransferase 4 family. MraY subfamily. It depends on Mg(2+) as a cofactor.

It is found in the cell membrane. The enzyme catalyses UDP-N-acetyl-alpha-D-muramoyl-L-alanyl-gamma-D-glutamyl-meso-2,6-diaminopimeloyl-D-alanyl-D-alanine + di-trans,octa-cis-undecaprenyl phosphate = di-trans,octa-cis-undecaprenyl diphospho-N-acetyl-alpha-D-muramoyl-L-alanyl-D-glutamyl-meso-2,6-diaminopimeloyl-D-alanyl-D-alanine + UMP. Its pathway is cell wall biogenesis; peptidoglycan biosynthesis. In terms of biological role, catalyzes the initial step of the lipid cycle reactions in the biosynthesis of the cell wall peptidoglycan: transfers peptidoglycan precursor phospho-MurNAc-pentapeptide from UDP-MurNAc-pentapeptide onto the lipid carrier undecaprenyl phosphate, yielding undecaprenyl-pyrophosphoryl-MurNAc-pentapeptide, known as lipid I. The polypeptide is Phospho-N-acetylmuramoyl-pentapeptide-transferase (Clostridium beijerinckii (strain ATCC 51743 / NCIMB 8052) (Clostridium acetobutylicum)).